Consider the following 679-residue polypeptide: Enzymatic polyprotein (679 aa).

The tract at residues 40–130 (LHCFVDTGAS…LYEPFIQFTD (91 aa)) is protease. Residue Asp-45 is part of the active site. The region spanning 272–452 (LKVIKPSKSP…KKINFLGLEI (181 aa)) is the Reverse transcriptase domain.

The protein belongs to the caulimoviridae enzymatic polyprotein family.

The enzyme catalyses DNA(n) + a 2'-deoxyribonucleoside 5'-triphosphate = DNA(n+1) + diphosphate. Encodes for at least two polypeptides: protease (PR) and reverse transcriptase (RT). The protease processes the polyprotein in cis. Reverse transcriptase is multifunctional enzyme that converts the viral RNA genome into dsDNA in viral cytoplasmic capsids. This enzyme displays a DNA polymerase activity that can copy either DNA or RNA templates, and a ribonuclease H (RNase H) activity that cleaves the RNA strand of RNA-DNA heteroduplexes in a partially processive 3'- to 5'-endonucleasic mode. Neo-synthesized pregenomic RNA (pgRNA) are encapsidated, and reverse-transcribed inside the nucleocapsid. Partial (+)DNA is synthesized from the (-)DNA template and generates the relaxed circular DNA (RC-DNA) genome. After budding and infection, the RC-DNA migrates in the nucleus, and is converted into a plasmid-like covalently closed circular DNA (cccDNA). The protein is Enzymatic polyprotein of Cauliflower mosaic virus (strain CM-1841) (CaMV).